Here is a 591-residue protein sequence, read N- to C-terminus: Probable metalloprotease ARX1 (591 aa).

It belongs to the peptidase M24 family. In terms of assembly, component of the nucleoplasmic and cytoplasmic pre-60S ribosomal particles.

The protein localises to the cytoplasm. Its subcellular location is the nucleus. In terms of biological role, probable metalloprotease involved in proper assembly of pre-ribosomal particles during the biogenesis of the 60S ribosomal subunit. Accompanies the pre-60S particles to the cytoplasm. This is Probable metalloprotease ARX1 (ARX1) from Eremothecium gossypii (strain ATCC 10895 / CBS 109.51 / FGSC 9923 / NRRL Y-1056) (Yeast).